Here is an 83-residue protein sequence, read N- to C-terminus: U5-theraphotoxin-Hs1a 6 (83 aa).

The first 21 residues, 1 to 21, serve as a signal peptide directing secretion; it reads MKTSMFLTLTGLVLLFVVCYA. Residues 22 to 49 constitute a propeptide that is removed on maturation; it reads SESEEKEFPKELLSSIFAADSDFKVEER. 3 cysteine pairs are disulfide-bonded: cysteine 51/cysteine 63, cysteine 56/cysteine 68, and cysteine 62/cysteine 75.

The protein belongs to the neurotoxin 10 (Hwtx-1) family. 51 (Hntx-8) subfamily. Hntx-8 sub-subfamily. Expressed by the venom gland.

It localises to the secreted. Functionally, agglutinates erythrocytes. The chain is U5-theraphotoxin-Hs1a 6 from Cyriopagopus schmidti (Chinese bird spider).